A 148-amino-acid polypeptide reads, in one-letter code: UPF0756 membrane protein NMC1845 (148 aa).

The next 4 helical transmembrane spans lie at 13-35 (LILLGVVSNNNSITISATILLLM), 50-70 (HGLNLGIILLTIGVLSPLVSG), 80-100 (FLNFKMISAVFIGIFVAWLAG), and 121-141 (VIGVAFMGGIPVGPLIAAGIL).

Belongs to the UPF0756 family.

Its subcellular location is the cell membrane. The chain is UPF0756 membrane protein NMC1845 from Neisseria meningitidis serogroup C / serotype 2a (strain ATCC 700532 / DSM 15464 / FAM18).